The chain runs to 130 residues: Protein CPn_0713/CP_0033/CPj0713/CpB0740 (130 aa).

It belongs to the chlamydial CPn_0713/CT_663/TC_0034 family.

This chain is Protein CPn_0713/CP_0033/CPj0713/CpB0740, found in Chlamydia pneumoniae (Chlamydophila pneumoniae).